The primary structure comprises 445 residues: Tubulin beta-3 chain (445 aa).

8 residues coordinate GTP: Gln-11, Glu-69, Ser-138, Gly-142, Thr-143, Gly-144, Asn-204, and Asn-226. Glu-69 contributes to the Mg(2+) binding site. The tract at residues 425-445 (YQDATAEEYDEEEQDGEEEHD) is disordered. Positions 429-445 (TAEEYDEEEQDGEEEHD) are enriched in acidic residues.

It belongs to the tubulin family. As to quaternary structure, dimer of alpha and beta chains. A typical microtubule is a hollow water-filled tube with an outer diameter of 25 nm and an inner diameter of 15 nM. Alpha-beta heterodimers associate head-to-tail to form protofilaments running lengthwise along the microtubule wall with the beta-tubulin subunit facing the microtubule plus end conferring a structural polarity. Microtubules usually have 13 protofilaments but different protofilament numbers can be found in some organisms and specialized cells. Mg(2+) serves as cofactor.

The protein localises to the cytoplasm. Its subcellular location is the cytoskeleton. Functionally, tubulin is the major constituent of microtubules, a cylinder consisting of laterally associated linear protofilaments composed of alpha- and beta-tubulin heterodimers. Microtubules grow by the addition of GTP-tubulin dimers to the microtubule end, where a stabilizing cap forms. Below the cap, tubulin dimers are in GDP-bound state, owing to GTPase activity of alpha-tubulin. The sequence is that of Tubulin beta-3 chain (TUBB3) from Zea mays (Maize).